An 83-amino-acid polypeptide reads, in one-letter code: Large ribosomal subunit protein uL24 (83 aa).

It belongs to the universal ribosomal protein uL24 family. As to quaternary structure, part of the 50S ribosomal subunit.

Functionally, one of two assembly initiator proteins, it binds directly to the 5'-end of the 23S rRNA, where it nucleates assembly of the 50S subunit. Its function is as follows. One of the proteins that surrounds the polypeptide exit tunnel on the outside of the subunit. This Symbiobacterium thermophilum (strain DSM 24528 / JCM 14929 / IAM 14863 / T) protein is Large ribosomal subunit protein uL24.